The chain runs to 355 residues: Chromatin modification-related protein EAF3 (355 aa).

The 75-residue stretch at 3 to 77 (EVGGKCLAYH…WDEWVSVDRI (75 aa)) folds into the Tudor-knot domain. The tract at residues 98–150 (ASLAQQQKTKNGGSAKRGGGGAHSESNHGGRRSGSGDRRDSNAEERGIVPSEG) is disordered. Positions 131–144 (GSGDRRDSNAEERG) are enriched in basic and acidic residues. Residues 163 to 353 (SRNKLRIHIP…TSSQYEGVAL (191 aa)) form the MRG domain.

It belongs to the MRG family. In terms of assembly, component of the NuA4 histone acetyltransferase complex.

The protein localises to the nucleus. Involved in deacetylation of histones, chromatin assembly and chromosome segregation. May act as a transcriptional oscillator, directing histone deacetylases to specific chromosomal domains. Component of the NuA4 histone acetyltransferase complex which is involved in transcriptional activation of selected genes principally by acetylation of nucleosomal histone H4 and H2A. The NuA4 complex is also involved in DNA repair. This is Chromatin modification-related protein EAF3 (EAF3) from Candida glabrata (strain ATCC 2001 / BCRC 20586 / JCM 3761 / NBRC 0622 / NRRL Y-65 / CBS 138) (Yeast).